The primary structure comprises 262 residues: WUSCHEL-related homeobox 11 (262 aa).

Over residues 1-11 (MDGGHSPDRHA) the composition is skewed to basic and acidic residues. Disordered stretches follow at residues 1–21 (MDGG…PVRS) and 79–115 (RRRQ…GHAG). A DNA-binding region (homeobox) is located at residues 18 to 82 (PVRSRWTPKP…NRRSRSRRRQ (65 aa)). Residues 84–112 (QLQAQAQAAAAAASSGSPPTASSGGLAPG) show a composition bias toward low complexity.

It belongs to the WUS homeobox family. As to quaternary structure, interacts with ERF3.

It is found in the nucleus. Transcription factor which may be involved in developmental processes. Promotes the development of crown roots (both initiation and elongation), main components of the fibrous root system, by regulating the expression of genes required for crown root development and hormone-responsive genes involved in cytokinin (e.g. RR1, RR2, RR3 and RR4) and auxin (e.g. IAA5, IAA11, IAA23 and IAA31) signaling. This chain is WUSCHEL-related homeobox 11, found in Oryza sativa subsp. indica (Rice).